The following is a 370-amino-acid chain: Putative alanine racemase 2 (370 aa).

The Proton acceptor; specific for D-alanine role is filled by Lys-38. The residue at position 38 (Lys-38) is an N6-(pyridoxal phosphate)lysine. Tyr-266 serves as the catalytic Proton acceptor; specific for L-alanine.

The protein belongs to the alanine racemase family. Pyridoxal 5'-phosphate serves as cofactor.

The catalysed reaction is L-alanine = D-alanine. The chain is Putative alanine racemase 2 (alr2) from Schizosaccharomyces pombe (strain 972 / ATCC 24843) (Fission yeast).